A 271-amino-acid chain; its full sequence is Exosome complex component Rrp42 (271 aa).

Belongs to the RNase PH family. Rrp42 subfamily. In terms of assembly, component of the archaeal exosome complex. Forms a hexameric ring-like arrangement composed of 3 Rrp41-Rrp42 heterodimers. The hexameric ring associates with a trimer of Rrp4 and/or Csl4 subunits.

Its subcellular location is the cytoplasm. Functionally, non-catalytic component of the exosome, which is a complex involved in RNA degradation. Contributes to the structuring of the Rrp41 active site. In Methanothermobacter thermautotrophicus (strain ATCC 29096 / DSM 1053 / JCM 10044 / NBRC 100330 / Delta H) (Methanobacterium thermoautotrophicum), this protein is Exosome complex component Rrp42.